The following is a 282-amino-acid chain: Snake venom serine protease NaSP (282 aa).

A signal peptide spans 1–18; sequence MVLIRVLASLLILQLSYS. Positions 19–56 are excised as a propeptide; the sequence is KSLDDGAKESAYDDEIQQSSWGNSTVNTTLTETVVIQL. 2 N-linked (GlcNAc...) asparagine glycosylation sites follow: Asn41 and Asn45. One can recognise a Peptidase S1 domain in the interval 57-280; sequence IMGGSECYKS…YIDWIRGIIA (224 aa). Disulfide bonds link Cys63–Cys195, Cys82–Cys98, Cys174–Cys241, Cys206–Cys220, and Cys231–Cys256. His97 serves as the catalytic Charge relay system. N-linked (GlcNAc...) asparagine glycosylation is present at Asn135. The active-site Charge relay system is Asp142. 2 N-linked (GlcNAc...) asparagine glycosylation sites follow: Asn149 and Asn153. The Charge relay system role is filled by Ser235.

Belongs to the peptidase S1 family. Snake venom subfamily. Monomer. As to expression, expressed by the venom gland.

The protein resides in the secreted. Functionally, snake venom serine protease that may act in the hemostasis system of the prey. The polypeptide is Snake venom serine protease NaSP (Naja atra (Chinese cobra)).